Consider the following 403-residue polypeptide: Betaine--homocysteine S-methyltransferase 1 (403 aa).

The 304-residue stretch at 8–311 (KGLLERLDAG…YHTRAIAEEL (304 aa)) folds into the Hcy-binding domain. Zn(2+) is bound by residues cysteine 214, cysteine 296, and cysteine 297.

In terms of assembly, homotetramer. It depends on Zn(2+) as a cofactor.

The protein localises to the cytoplasm. The enzyme catalyses L-homocysteine + glycine betaine = N,N-dimethylglycine + L-methionine. It participates in amine and polyamine degradation; betaine degradation; sarcosine from betaine: step 1/2. The protein operates within amino-acid biosynthesis; L-methionine biosynthesis via de novo pathway; L-methionine from L-homocysteine (BhmT route): step 1/1. Its function is as follows. Involved in the regulation of homocysteine metabolism. Converts betaine and homocysteine to dimethylglycine and methionine, respectively. This reaction is also required for the irreversible oxidation of choline. This chain is Betaine--homocysteine S-methyltransferase 1 (bhmt), found in Xenopus tropicalis (Western clawed frog).